A 300-amino-acid chain; its full sequence is MQSTLSQSPGSRFSQYMALTKPRVTQLAVFCAVIGMFLATPGMVPWHVLIGGTVGIWLLAGAAFAINCLVEQKIDAMMRRTAWRPSARGEITTPQILLFSAVLGSVGAWTLYTFTNPLTMWLTIATFVGYAVIYTLLLKPMTPQNIVIGGASGAMPPALGWAAVTGAVPGDAWILVLIIFVWTPPHFWVLALYRRKDYENAGLPMLPVTHGEKFTRLHILLYTVILFAVTLMPFISGMSGAVYLTSAVLLGAVFLAYAWKIHRDYSDELARKAFRYSIVYLSLLFAALLVDHYARPLLGV.

9 consecutive transmembrane segments (helical) span residues 24–44, 46–66, 94–114, 118–138, 146–166, 172–192, 217–237, 239–259, and 278–298; these read VTQLAVFCAVIGMFLATPGMV, WHVLIGGTVGIWLLAGAAFAI, PQILLFSAVLGSVGAWTLYTF, LTMWLTIATFVGYAVIYTLLL, IVIGGASGAMPPALGWAAVTG, AWILVLIIFVWTPPHFWVLAL, LHILLYTVILFAVTLMPFISG, SGAVYLTSAVLLGAVFLAYAW, and IVYLSLLFAALLVDHYARPLL.

Belongs to the UbiA prenyltransferase family. Protoheme IX farnesyltransferase subfamily.

It is found in the cell inner membrane. The catalysed reaction is heme b + (2E,6E)-farnesyl diphosphate + H2O = Fe(II)-heme o + diphosphate. Its pathway is porphyrin-containing compound metabolism; heme O biosynthesis; heme O from protoheme: step 1/1. Converts heme B (protoheme IX) to heme O by substitution of the vinyl group on carbon 2 of heme B porphyrin ring with a hydroxyethyl farnesyl side group. This is Protoheme IX farnesyltransferase from Burkholderia cenocepacia (strain HI2424).